A 121-amino-acid chain; its full sequence is Ribonuclease P protein component (121 aa).

This sequence belongs to the RnpA family. In terms of assembly, consists of a catalytic RNA component (M1 or rnpB) and a protein subunit.

It carries out the reaction Endonucleolytic cleavage of RNA, removing 5'-extranucleotides from tRNA precursor.. Functionally, RNaseP catalyzes the removal of the 5'-leader sequence from pre-tRNA to produce the mature 5'-terminus. It can also cleave other RNA substrates such as 4.5S RNA. The protein component plays an auxiliary but essential role in vivo by binding to the 5'-leader sequence and broadening the substrate specificity of the ribozyme. This chain is Ribonuclease P protein component, found in Alcanivorax borkumensis (strain ATCC 700651 / DSM 11573 / NCIMB 13689 / SK2).